Here is a 156-residue protein sequence, read N- to C-terminus: Small ribosomal subunit protein uS7 (156 aa).

The protein belongs to the universal ribosomal protein uS7 family. In terms of assembly, part of the 30S ribosomal subunit. Contacts proteins S9 and S11.

One of the primary rRNA binding proteins, it binds directly to 16S rRNA where it nucleates assembly of the head domain of the 30S subunit. Is located at the subunit interface close to the decoding center, probably blocks exit of the E-site tRNA. The polypeptide is Small ribosomal subunit protein uS7 (Nocardioides sp. (strain ATCC BAA-499 / JS614)).